An 865-amino-acid polypeptide reads, in one-letter code: Protein translocase subunit SecA (865 aa).

ATP contacts are provided by residues Gln93, 111–115 (GEGKT), and Asp501. Positions 841, 843, 852, and 853 each coordinate Zn(2+).

The protein belongs to the SecA family. In terms of assembly, monomer and homodimer. Part of the essential Sec protein translocation apparatus which comprises SecA, SecYEG and auxiliary proteins SecDF-YajC and YidC. The cofactor is Zn(2+).

The protein resides in the cell inner membrane. Its subcellular location is the cytoplasm. The catalysed reaction is ATP + H2O + cellular proteinSide 1 = ADP + phosphate + cellular proteinSide 2.. Functionally, part of the Sec protein translocase complex. Interacts with the SecYEG preprotein conducting channel. Has a central role in coupling the hydrolysis of ATP to the transfer of proteins into and across the cell membrane, serving as an ATP-driven molecular motor driving the stepwise translocation of polypeptide chains across the membrane. The sequence is that of Protein translocase subunit SecA from Helicobacter pylori (strain G27).